The following is an 89-amino-acid chain: uncharacterized protein (89 aa).

To B.licheniformis xpaF1 and to B.subtilis XhlA.

This is an uncharacterized protein from Bacillus licheniformis.